The chain runs to 462 residues: Alkaline phosphatase 3 (462 aa).

Residues 1–32 (MKKFPKKLLPIAVLSSIAFSSLASGSVPEASA) form the signal peptide. D52 is a binding site for Mg(2+). D52 contacts Zn(2+). Residue S101 is the Phosphoserine intermediate of the active site. T154 and E275 together coordinate Mg(2+). Zn(2+)-binding residues include D280, H284, D322, H323, and H419.

It belongs to the alkaline phosphatase family. As to quaternary structure, monomer. It depends on Mg(2+) as a cofactor. The cofactor is Zn(2+).

The catalysed reaction is a phosphate monoester + H2O = an alcohol + phosphate. The polypeptide is Alkaline phosphatase 3 (phoB) (Bacillus subtilis (strain 168)).